The primary structure comprises 271 residues: Glutamate racemase (271 aa).

Substrate-binding positions include Asp12 to Ser13 and Tyr44 to Gly45. Cys75 (proton donor/acceptor) is an active-site residue. Asn76–Ser77 is a substrate binding site. Cys185 acts as the Proton donor/acceptor in catalysis. Thr186–His187 contributes to the substrate binding site.

Belongs to the aspartate/glutamate racemases family.

It carries out the reaction L-glutamate = D-glutamate. The protein operates within cell wall biogenesis; peptidoglycan biosynthesis. In terms of biological role, provides the (R)-glutamate required for cell wall biosynthesis. This is Glutamate racemase from Mycobacterium bovis (strain ATCC BAA-935 / AF2122/97).